The chain runs to 332 residues: Serpentine receptor class gamma-3 (332 aa).

A run of 7 helical transmembrane segments spans residues F23–S43, L72–V92, I101–A121, I144–D164, W184–V204, A231–F251, and Y263–V283.

This sequence belongs to the nematode receptor-like protein srg family.

It localises to the membrane. This chain is Serpentine receptor class gamma-3 (srg-3), found in Caenorhabditis elegans.